Reading from the N-terminus, the 148-residue chain is Protoporphyrinogen IX oxidase (148 aa).

The next 4 helical transmembrane spans lie at 7-27 (YFLW…AALF), 58-78 (SFIA…MLLI), 86-106 (GGWL…HFYC), and 128-148 (FNEA…VKPF). Histidine 15 lines the heme pocket. Lysine 92 is a binding site for heme.

Belongs to the HemJ family. As to quaternary structure, homodimer. Heme b is required as a cofactor.

It is found in the cell membrane. The enzyme catalyses protoporphyrinogen IX + 3 A = protoporphyrin IX + 3 AH2. The protein operates within porphyrin-containing compound metabolism; protoporphyrin-IX biosynthesis; protoporphyrin-IX from protoporphyrinogen-IX: step 1/1. Catalyzes the oxidation of protoporphyrinogen IX to protoporphyrin IX. Is involved in the biosynthesis of tetrapyrrole molecules like heme. Does not use oxygen or artificial electron acceptors such as menadione or benzoquinone. The chain is Protoporphyrinogen IX oxidase from Helicobacter pylori (strain ATCC 700392 / 26695) (Campylobacter pylori).